The chain runs to 872 residues: Bifunctional heparan sulfate N-deacetylase/N-sulfotransferase 4 (872 aa).

The Cytoplasmic segment spans residues 1–13 (MNLILKFRRSFRT). A helical; Signal-anchor for type II membrane protein transmembrane segment spans residues 14–34 (LIVLLATFCLVSILISAYFLY). Topologically, residues 35 to 872 (SGYKQEMTLI…WLRQELQKVR (838 aa)) are lumenal. The heparan sulfate N-deacetylase 4 stretch occupies residues 36 to 588 (GYKQEMTLIE…KRHKDIWSRE (553 aa)). Residues Asn226, Asn341, and Asn391 are each glycosylated (N-linked (GlcNAc...) asparagine). Residues 589 to 872 (KTCDHLPKFL…WLRQELQKVR (284 aa)) form a heparan sulfate N-sulfotransferase 4 region. Lys604 functions as the For sulfotransferase activity in the catalytic mechanism. 3'-phosphoadenylyl sulfate is bound at residue 604-608 (KTGTT). A glycan (N-linked (GlcNAc...) asparagine) is linked at Asn657. Ser702 lines the 3'-phosphoadenylyl sulfate pocket. Residue Asn793 is glycosylated (N-linked (GlcNAc...) asparagine). A disulfide bridge connects residues Cys808 and Cys818. 823–827 (KGRKY) is a binding site for 3'-phosphoadenylyl sulfate.

Belongs to the sulfotransferase 1 family. NDST subfamily. In terms of assembly, monomer. As to expression, expressed at low level in brain and throughout embryogenesis. Not expressed in other tissues.

It is found in the golgi apparatus membrane. It carries out the reaction alpha-D-glucosaminyl-[heparan sulfate](n) + 3'-phosphoadenylyl sulfate = N-sulfo-alpha-D-glucosaminyl-[heparan sulfate](n) + adenosine 3',5'-bisphosphate + 2 H(+). Its pathway is glycan metabolism; heparan sulfate biosynthesis. It functions in the pathway glycan metabolism; heparin biosynthesis. Its function is as follows. Essential bifunctional enzyme that catalyzes both the N-deacetylation and the N-sulfation of glucosamine (GlcNAc) of the glycosaminoglycan in heparan sulfate. Modifies the GlcNAc-GlcA disaccharide repeating sugar backbone to make N-sulfated heparosan, a prerequisite substrate for later modifications in heparin biosynthesis. Has low deacetylase activity but high sulfotransferase activity. The sequence is that of Bifunctional heparan sulfate N-deacetylase/N-sulfotransferase 4 (Ndst4) from Mus musculus (Mouse).